Consider the following 587-residue polypeptide: Protein NDNF (587 aa).

The first 24 residues, 1–24, serve as a signal peptide directing secretion; the sequence is MQRSTMLPGVELLLLFLLSTSLHA. N-linked (GlcNAc...) asparagine glycans are attached at residues Asn-109, Asn-129, Asn-190, Asn-321, Asn-334, Asn-459, Asn-498, and Asn-558.

As to quaternary structure, binds heparin. Interacts with dally; the interaction promotes dally degradation. Interacts with dpp and gbb.

The protein resides in the secreted. Its subcellular location is the extracellular space. It localises to the extracellular matrix. Functionally, secretory protein that acts as a feedback regulator of dpp/BMP, wg and hh signaling pathways. In the developing wing, is a dosage-dependent modulator of dpp/BMP signaling involved in wing growth and crossvein patterning; low levels promote and high levels inhibit dpp/BMP signaling. In the early pupal wing, inhibits dpp/BMP signaling activity to prevent the formation of ectopic crossveins in the posterior compartment. Binds to dpp and gbb to modulate their release and activity decreasing dpp/BMP signaling in the responding cells. During wing development regulates dpp/BMP coreceptor dally availability on the cell surface. Might have a role in testis development. This chain is Protein NDNF, found in Drosophila melanogaster (Fruit fly).